A 273-amino-acid chain; its full sequence is Pantothenate synthetase (273 aa).

27 to 34 (MGALHAGH) is a binding site for ATP. Catalysis depends on H34, which acts as the Proton donor. Q58 contributes to the (R)-pantoate binding site. Residue Q58 coordinates beta-alanine. ATP is bound at residue 144-147 (GKKD). Position 150 (Q150) interacts with (R)-pantoate. ATP-binding positions include V173 and 181 to 184 (LSSR).

It belongs to the pantothenate synthetase family. Homodimer.

It is found in the cytoplasm. The enzyme catalyses (R)-pantoate + beta-alanine + ATP = (R)-pantothenate + AMP + diphosphate + H(+). The protein operates within cofactor biosynthesis; (R)-pantothenate biosynthesis; (R)-pantothenate from (R)-pantoate and beta-alanine: step 1/1. Catalyzes the condensation of pantoate with beta-alanine in an ATP-dependent reaction via a pantoyl-adenylate intermediate. The chain is Pantothenate synthetase from Campylobacter hominis (strain ATCC BAA-381 / DSM 21671 / CCUG 45161 / LMG 19568 / NCTC 13146 / CH001A).